The chain runs to 152 residues: Regulatory protein RecX (152 aa).

It belongs to the RecX family.

The protein localises to the cytoplasm. Its function is as follows. Modulates RecA activity. The polypeptide is Regulatory protein RecX (Haemophilus influenzae (strain 86-028NP)).